Reading from the N-terminus, the 81-residue chain is MKTLLLSLVVMTIVYLDLGYTLKCHESENLDDHVVCEEDETMCYKFTFVPFRDFEIVARGCSASCPEEKDVVCCSTDLCNK.

A signal peptide spans 1–21; it reads MKTLLLSLVVMTIVYLDLGYT. 4 disulfide bridges follow: Cys24-Cys43, Cys36-Cys61, Cys65-Cys73, and Cys74-Cys79.

The protein belongs to the three-finger toxin family. Short-chain subfamily. In terms of tissue distribution, expressed by the venom gland.

Its subcellular location is the secreted. The sequence is that of Three-finger toxin 3FTx-Oxy6 from Oxyuranus microlepidotus (Inland taipan).